Consider the following 365-residue polypeptide: Chorismate synthase (365 aa).

NADP(+) contacts are provided by Arg48 and Arg54. FMN-binding positions include 131–133 (RSS), 243–244 (NA), Gly288, 303–307 (KPTSS), and Arg329.

It belongs to the chorismate synthase family. Homotetramer. FMNH2 is required as a cofactor.

The enzyme catalyses 5-O-(1-carboxyvinyl)-3-phosphoshikimate = chorismate + phosphate. The protein operates within metabolic intermediate biosynthesis; chorismate biosynthesis; chorismate from D-erythrose 4-phosphate and phosphoenolpyruvate: step 7/7. Catalyzes the anti-1,4-elimination of the C-3 phosphate and the C-6 proR hydrogen from 5-enolpyruvylshikimate-3-phosphate (EPSP) to yield chorismate, which is the branch point compound that serves as the starting substrate for the three terminal pathways of aromatic amino acid biosynthesis. This reaction introduces a second double bond into the aromatic ring system. This is Chorismate synthase from Sinorhizobium medicae (strain WSM419) (Ensifer medicae).